A 286-amino-acid polypeptide reads, in one-letter code: Lipoyl synthase (286 aa).

[4Fe-4S] cluster contacts are provided by C38, C43, C49, C64, C68, C71, and S276. The 216-residue stretch at 50–265 folds into the Radical SAM core domain; that stretch reads WEQGVATFMI…ENIALDMGFL (216 aa).

It belongs to the radical SAM superfamily. Lipoyl synthase family. [4Fe-4S] cluster serves as cofactor.

Its subcellular location is the cytoplasm. The enzyme catalyses [[Fe-S] cluster scaffold protein carrying a second [4Fe-4S](2+) cluster] + N(6)-octanoyl-L-lysyl-[protein] + 2 oxidized [2Fe-2S]-[ferredoxin] + 2 S-adenosyl-L-methionine + 4 H(+) = [[Fe-S] cluster scaffold protein] + N(6)-[(R)-dihydrolipoyl]-L-lysyl-[protein] + 4 Fe(3+) + 2 hydrogen sulfide + 2 5'-deoxyadenosine + 2 L-methionine + 2 reduced [2Fe-2S]-[ferredoxin]. Its pathway is protein modification; protein lipoylation via endogenous pathway; protein N(6)-(lipoyl)lysine from octanoyl-[acyl-carrier-protein]: step 2/2. Its function is as follows. Catalyzes the radical-mediated insertion of two sulfur atoms into the C-6 and C-8 positions of the octanoyl moiety bound to the lipoyl domains of lipoate-dependent enzymes, thereby converting the octanoylated domains into lipoylated derivatives. In Karelsulcia muelleri (strain GWSS) (Sulcia muelleri), this protein is Lipoyl synthase.